A 123-amino-acid chain; its full sequence is VQ motif-containing protein 29 (123 aa).

Residues 24-55 form a disordered region; it reads TKNYLTSLHSTRKQPSKPLKRPAISSPLNPMH. Positions 33–43 are enriched in basic residues; the sequence is STRKQPSKPLK. Positions 66–75 match the VQ motif; sequence FKVLVQRLTG. Basic and acidic residues predominate over residues 77–94; sequence PEHETVQAKPLKTSDDAA. Residues 77-123 form a disordered region; that stretch reads PEHETVQAKPLKTSDDAAKQSSSSFAFDPSSSWGDFSFQNPANISRW. Residues 97 to 108 are compositionally biased toward low complexity; that stretch reads SSSSFAFDPSSS. The segment covering 109–123 has biased composition (polar residues); it reads WGDFSFQNPANISRW.

The protein localises to the nucleus. In terms of biological role, may function as negative regulator of flowering transition. The sequence is that of VQ motif-containing protein 29 from Arabidopsis thaliana (Mouse-ear cress).